The following is a 139-amino-acid chain: Large ribosomal subunit protein uL24 (139 aa).

The tract at residues 1–25 (MKRNTNVSSSRRKSRKAHFTASSGE) is disordered.

Belongs to the universal ribosomal protein uL24 family.

This chain is Large ribosomal subunit protein uL24 (rpl26), found in Dictyostelium discoideum (Social amoeba).